Reading from the N-terminus, the 456-residue chain is NADH oxidase (456 aa).

Asn10 contacts FAD. The active-site Proton acceptor is His11. FAD contacts are provided by Ala12, Asp34, Gln35, Cys44, Val81, Ala110, Ser113, Lys143, and Tyr170. The active-site Redox-active is the Cys44. The residue at position 44 (Cys44) is a Cysteine sulfinic acid (-SO2H). NAD(+)-binding residues include Ile171, Asp190, Tyr199, and Gly254. Position 292 (Asp292) interacts with FAD. NAD(+) is bound at residue Ala308. The FAD site is built by Leu309, Ala310, and Ser311. An NAD(+)-binding site is contributed by Gly339. Residue Phe436 coordinates FAD.

It depends on FAD as a cofactor.

It catalyses the reaction 2 NADH + O2 + 2 H(+) = 2 NAD(+) + 2 H2O. Catalyzes the four-electron reduction of molecular oxygen to water. In Streptococcus pyogenes serotype M6 (strain ATCC BAA-946 / MGAS10394), this protein is NADH oxidase.